A 514-amino-acid chain; its full sequence is Cytochrome P450 monooxygenase ptmQ (514 aa).

Residues Y3 to L23 form a helical membrane-spanning segment. Residue N148 is glycosylated (N-linked (GlcNAc...) asparagine). Position 452 (C452) interacts with heme. N486 is a glycosylation site (N-linked (GlcNAc...) asparagine).

It belongs to the cytochrome P450 family. Heme is required as a cofactor.

It is found in the membrane. Its pathway is secondary metabolite biosynthesis. In terms of biological role, cytochrome P450 monooxygenase; part of the gene cluster that mediates the biosynthesis of the indole diterpenes penitrems. The geranylgeranyl diphosphate (GGPP) synthase ptmG catalyzes the first step in penitrem biosynthesis via conversion of farnesyl pyrophosphate and isopentyl pyrophosphate into geranylgeranyl pyrophosphate (GGPP). Condensation of indole-3-glycerol phosphate with GGPP by the prenyl transferase ptmC then forms 3-geranylgeranylindole (3-GGI). Epoxidation by the FAD-dependent monooxygenase ptmM leads to a epoxidized-GGI that is substrate of the terpene cyclase ptmB for cyclization to yield paspaline. Paspaline is subsequently converted to 13-desoxypaxilline by the cytochrome P450 monooxygenase ptmP, the latter being then converted to paxilline by the cytochrome P450 monooxygenase ptmQ. Paxilline is converted to beta-paxitriol via C-10 ketoreduction by the short-chain dehydrogenase ptmH which can be monoprenylated at the C-20 by the indole diterpene prenyltransferase ptmD. A two-step elimination (acetylation and elimination) process performed by the O-acetyltransferase ptmV and ptmI leads to the production of the prenylated form of penijanthine. The FAD-linked oxidoreductase ptmO then converts the prenylated form of penijanthine into PC-M5 which is in turn transformed into PC-M4 by the aromatic dimethylallyltransferase ptmE. Five sequential oxidative transformations performed by the cytochrome P450 monooxygenases ptmK, ptmU, ptmL, ptmN and ptmJ yield the various penitrem compounds. PtmK, ptmU and ptmM are involved in the formation of the key bicyclic ring of penitrem C via the formation of the intermediates secopenitrem D and penitrem D. PtmL catalyzes the epoxidation of penitrem D and C to yield penitrem B and F, respectively. PtmJ catalyzes the last benzylic hydroxylation to convert penitrem B to prenitrem E and penitrem F to penitrem A. The polypeptide is Cytochrome P450 monooxygenase ptmQ (Penicillium ochrochloron).